The sequence spans 1651 residues: MDSKKKSSTEAEGSKERGLVHVWQAGSFSLTPERLPGWGGKTVLQAALGVRHGVLLTEDGEVYSFGTLPWKSESAEICPSSPLLESALVGHHVITVATGSFHSGAVTESGVVYMWGENAAGQCAVANQQYVPEPSPVSISDSETSPSLAVRILQLACGEEHTLALSLSREIWAWGTGCQLGLITTTFPVTKPQKVEHLAGRVVLQVACGAFHSLALVQCLPPQDLKPVPERCNQCSQLLITMTDKEDHVIISDSHCCPLGVTLSESQAEKHASPAPSPHPEALDEQGEVFENTVVEAELNMGSSQTTSGSAISTQQNVVGTAEVSSARTAPSYPDTHAVTAYLQKLSEHSMRENHEPGEKPPQVQPLVEEAVPDLHSPPTTSTSALNSLVVSCASAVGVRVAATYEAGALSLKKVMNFYSTAPCETAAQSGSASTGPESLKDLREEQVKQESLQGKKSSSLMDIREEELEGGSRRLSLPGLLSQVSPRLLRKAARVKTRTVVLTPTYSGEADALLPSLRTEVWTWGKGKEGQLGHGDVLPRLQPLCVKCLDGKEVIHLEAGGSHSLALTAKSQVYSWGSNTFGQLGHSEFPTTVPRLSKVSSENGVWSVAAGQDYSLFLVDTEDFQPGLYYSGRQDRAEGDTLPENPSGTKTPVLLSCSKLGYISRVTAGKDSYLALVDKNIMGYIASLHELASTERRFYSKLSEIKSQILRPLLSLENLGTVTTVQLLQEVASRFSKLCYLIGQHGASLSSYLQGMKEASSLVIMKHSSLFLDSYTEYCTSVSNFLVMGGFQLLAKPAIDFLNKNQELLQDLSEVNDENTQLMEILNMLFFLPIRRLHNYAKVLLKLATCFEVTSPEYQKLQDSSSCYESLALHLGKKRKEAEYTLSFWKTFPGKMTDSLRKPERRLLCESSNRALSLQHAGRFSVNWFILFNDALVHAQFSTHHVFPLATLWAEPLSEEAGSVNGLKITTPEEQFTLISSTPQEKTKWLRAISQAVDQALRGTSDFPLYGGGSSVQRQEPPISRSAKYTFYKDTRLKDATYDGRWLSGKPHGRGVLKWPDGKMYSGMFRNGLEDGYGEYRIPNKALNKEDHYVGHWKEGKMCGQGVYSYASGEVFEGCFQDNMRHGHGLLRSGKLTSSSPSMFIGQWVMDKKAGYGVFDDITRGEKYMGMWQDDVCQGNGVVVTQFGLYYEGNFHLNKMMGNGVLLSEDDTIYEGEFSDDWTLSGKGTLTMPHGDYIEGYFSGEWGSGIKITGTYFKPSLYESDKDKPKAFRKLGNLAVAADEKWRAVFEECWRQLGCESPGQGEVWKAWDNIAVALTTNRRQHKDSPEILSRSQTQTLESLEYIPQHIGAFSVEKYDDIKKYLIKACDTPLHPLGRLVETLVAVYRMTYVGVGANRRLLQEAVKEIKSYLKRIFQLVRFLFPELPEEGSTIPLSAPLPTGRRSFCTGKSDSRSESPEPGYVVTSSGLLLPVLLPRLYPPLFMLYALDNDREEDIYWECVLRLNKQPDIALLGFLGVQKKFWPATLSILGESKKVLSTTKDACFASAVECLQQISTTFTPSDKLKVIQQTFEEISQSVLASLQEDFLWSMDDLFPVFLYVVLRARIRNLGSEVHLIEDLMDPFLQHGEQGIMFTTLKACYFQIQREKLN.

3 RCC1 repeats span residues Asp59–Glu108, Ser109–Leu167, and Arg169–Gln218. A disordered region spans residues Glu425–Met462. The segment covering Ala427–Pro437 has biased composition (polar residues). The span at Ser439–Lys449 shows a compositional bias: basic and acidic residues. Over residues Gln450–Leu461 the composition is skewed to polar residues. Phosphoserine is present on residues Ser459, Ser460, Ser477, and Ser486. Thr504 carries the post-translational modification Phosphothreonine. 2 RCC1 repeats span residues Arg519–Ala570 and Ser572–Asp621. N6-acetyllysine is present on Lys527. The DH domain maps to Gly684–Lys879. Residues Gly895 to Ala1001 enclose the PH domain. 8 MORN repeats span residues Tyr1043 to Met1065, Tyr1066 to Leu1088, Tyr1094 to Val1116, Phe1117 to Ser1139, Phe1145 to Glu1167, Tyr1169 to Tyr1191, Tyr1192 to Ile1214, and Tyr1215 to Tyr1238. Position 1329 is a phosphoserine (Ser1329). Residues Lys1507 to Asn1651 enclose the VPS9 domain.

As to quaternary structure, forms a heteromeric complex with ALS2CL. Interacts with ALS2CL.

Its function is as follows. May act as a GTPase regulator. Controls survival and growth of spinal motoneurons. The chain is Alsin (Als2) from Mus musculus (Mouse).